A 270-amino-acid chain; its full sequence is 4-hydroxy-tetrahydrodipicolinate reductase (270 aa).

Residues 9-14 (GAGGRM) and Glu35 contribute to the NAD(+) site. Residue Arg36 coordinates NADP(+). NAD(+) is bound by residues 99-101 (GTT) and 123-126 (ASNF). Catalysis depends on His156, which acts as the Proton donor/acceptor. His157 is a (S)-2,3,4,5-tetrahydrodipicolinate binding site. Lys160 acts as the Proton donor in catalysis. 166-167 (GT) serves as a coordination point for (S)-2,3,4,5-tetrahydrodipicolinate.

It belongs to the DapB family.

The protein localises to the cytoplasm. The enzyme catalyses (S)-2,3,4,5-tetrahydrodipicolinate + NAD(+) + H2O = (2S,4S)-4-hydroxy-2,3,4,5-tetrahydrodipicolinate + NADH + H(+). It carries out the reaction (S)-2,3,4,5-tetrahydrodipicolinate + NADP(+) + H2O = (2S,4S)-4-hydroxy-2,3,4,5-tetrahydrodipicolinate + NADPH + H(+). Its pathway is amino-acid biosynthesis; L-lysine biosynthesis via DAP pathway; (S)-tetrahydrodipicolinate from L-aspartate: step 4/4. In terms of biological role, catalyzes the conversion of 4-hydroxy-tetrahydrodipicolinate (HTPA) to tetrahydrodipicolinate. This Haemophilus influenzae (strain PittEE) protein is 4-hydroxy-tetrahydrodipicolinate reductase.